The primary structure comprises 321 residues: Methionyl-tRNA formyltransferase (321 aa).

113–116 (SILP) contributes to the (6S)-5,6,7,8-tetrahydrofolate binding site.

Belongs to the Fmt family.

It catalyses the reaction L-methionyl-tRNA(fMet) + (6R)-10-formyltetrahydrofolate = N-formyl-L-methionyl-tRNA(fMet) + (6S)-5,6,7,8-tetrahydrofolate + H(+). Its function is as follows. Attaches a formyl group to the free amino group of methionyl-tRNA(fMet). The formyl group appears to play a dual role in the initiator identity of N-formylmethionyl-tRNA by promoting its recognition by IF2 and preventing the misappropriation of this tRNA by the elongation apparatus. This is Methionyl-tRNA formyltransferase from Pseudoalteromonas translucida (strain TAC 125).